The sequence spans 479 residues: Aspartyl/glutamyl-tRNA(Asn/Gln) amidotransferase subunit B (479 aa).

Belongs to the GatB/GatE family. GatB subfamily. Heterotrimer of A, B and C subunits.

The catalysed reaction is L-glutamyl-tRNA(Gln) + L-glutamine + ATP + H2O = L-glutaminyl-tRNA(Gln) + L-glutamate + ADP + phosphate + H(+). It carries out the reaction L-aspartyl-tRNA(Asn) + L-glutamine + ATP + H2O = L-asparaginyl-tRNA(Asn) + L-glutamate + ADP + phosphate + 2 H(+). Functionally, allows the formation of correctly charged Asn-tRNA(Asn) or Gln-tRNA(Gln) through the transamidation of misacylated Asp-tRNA(Asn) or Glu-tRNA(Gln) in organisms which lack either or both of asparaginyl-tRNA or glutaminyl-tRNA synthetases. The reaction takes place in the presence of glutamine and ATP through an activated phospho-Asp-tRNA(Asn) or phospho-Glu-tRNA(Gln). The sequence is that of Aspartyl/glutamyl-tRNA(Asn/Gln) amidotransferase subunit B from Streptococcus pyogenes serotype M3 (strain ATCC BAA-595 / MGAS315).